The following is a 291-amino-acid chain: Energy-coupling factor transporter ATP-binding protein EcfA2 (291 aa).

One can recognise an ABC transporter domain in the interval Ile3–Gly246. Gly40–Ser47 contacts ATP.

It belongs to the ABC transporter superfamily. Energy-coupling factor EcfA family. Forms a stable energy-coupling factor (ECF) transporter complex composed of 2 membrane-embedded substrate-binding proteins (S component), 2 ATP-binding proteins (A component) and 2 transmembrane proteins (T component).

It localises to the cell membrane. Functionally, ATP-binding (A) component of a common energy-coupling factor (ECF) ABC-transporter complex. Unlike classic ABC transporters this ECF transporter provides the energy necessary to transport a number of different substrates. This chain is Energy-coupling factor transporter ATP-binding protein EcfA2, found in Latilactobacillus sakei subsp. sakei (strain 23K) (Lactobacillus sakei subsp. sakei).